The following is a 347-amino-acid chain: Subtilase cytotoxin subunit A (347 aa).

An N-terminal signal peptide occupies residues 1-21; that stretch reads MLKILWTYILFLLFISASARA. The region spanning 24-327 is the Peptidase S8 domain; sequence PWYFDAIGLT…GRVLNAEKAI (304 aa). Catalysis depends on charge relay system residues Asp-52, His-89, and Ser-272. Cys-288 and Cys-331 are joined by a disulfide. An A2 domain region spans residues 322 to 347; the sequence is NAEKAISMFCKKNYIPVRQGRMSEEL. The short motif at 344–347 is the Prevents secretion from ER element; sequence SEEL.

This sequence belongs to the peptidase S8 family. Forms a complex with SubB with the stoichiometry SubA1:SubB5 (called SubAB5).

It is found in the secreted. The protein localises to the host cytoplasm. The protein resides in the host cytosol. Its subcellular location is the host endoplasmic reticulum lumen. In terms of biological role, protease subunit of subtilase cytotoxin SubAB5. An endoprotease specific for host endoplasmic reticulum (ER) chaperone BiP/HSPA5, has no activity on human HSP70 or HSPA8. Cleaves between 'Leu-416' and 'Leu-417' of BiP/HSPA5 in the hinge between BiP's ATPase and protein-binding domains. This induces host ER stress response and eventual cell death. Culture supernatant of E.coli expressing both subA and subB are toxic for Vero cells (African green monkey kidney cell line), Chinese hamster ovary cells and Hct-8 cells (human colonic epithelial cell line); the subunits are not toxic individually. Purified SubAB5 is highly toxic, &lt;0.1 pg is able to kill at least 50% of 30'000 Vero cells in a microtiter plate assay after 3 days; no cytotoxicity is seen at 24 hours. Preabsorption with cells expressing a ganglioside GM2 mimic reduced cytotoxicity of SubAB5 by 93% in the Vero cytotoxicity assay. Intraperitoneal injection of 200 ng of purified SubAB5 kills mice; the higher the dose the faster the mice die. Animals injected intraperitoneally with purified SubAB5 have microvascular thrombi in the brain and other organs, including the renal tubules and glomeruli. Injection induces an unfolded response in mice. Mice fed E.coli cells expressing cloned SubAB5 experience drastic weight loss and appear ill and lethargic. Protein synthesis in Vero cells is transiently inhibited by SubAB5; both subunits are required for this effect. Inhibition of protein synthesis is prevented by brefeldin A; cells are arrested in the G1 phase. SubAB5 at 100 ng/ml induced caspase-dependent apoptosis in Vero cells through mitochondrial membrane damage. The polypeptide is Subtilase cytotoxin subunit A (Escherichia coli).